We begin with the raw amino-acid sequence, 228 residues long: MEGRLFTFLGAIGGHGQEWIILSHYVLVIGIIFIIARAATRKLQLVPTGSQNVLEAFVGGIISMGADTMGEKNARTYMPLIGSLALVIFVSNMIGVIPGFEAPTSNINFTLSLALIVFVYYNYLGIKKNGFVAYFKHFMGPMPVLAPLMFPIEIISHLSRIVSLSFRLFGSIRGDDMFLMVLLMLVPWILPLPGFFLLTAFGVLQAFIFSILTYVYIAGSIMMEHEEH.

Transmembrane regions (helical) follow at residues 16–36 (GQEWIILSHYVLVIGIIFIIA), 45–65 (LVPTGSQNVLEAFVGGIISMG), 80–100 (LIGSLALVIFVSNMIGVIPGF), 106–126 (NINFTLSLALIVFVYYNYLGI), 138–158 (FMGPMPVLAPLMFPIEIISHL), 178–198 (FLMVLLMLVPWILPLPGFFLL), and 201–221 (FGVLQAFIFSILTYVYIAGSI).

It belongs to the ATPase A chain family. In terms of assembly, F-type ATPases have 2 components, CF(1) - the catalytic core - and CF(0) - the membrane proton channel. CF(1) has five subunits: alpha(3), beta(3), gamma(1), delta(1), epsilon(1). CF(0) has three main subunits: a(1), b(2) and c(9-12). The alpha and beta chains form an alternating ring which encloses part of the gamma chain. CF(1) is attached to CF(0) by a central stalk formed by the gamma and epsilon chains, while a peripheral stalk is formed by the delta and b chains.

It is found in the cell inner membrane. Its function is as follows. Key component of the proton channel; it plays a direct role in the translocation of protons across the membrane. This chain is ATP synthase subunit a, found in Aliarcobacter butzleri (strain RM4018) (Arcobacter butzleri).